A 574-amino-acid chain; its full sequence is Lengsin (574 aa).

2 disordered regions span residues 1–36 and 66–131; these read MNDE…KVTK and GNMS…IPTT. Basic and acidic residues predominate over residues 11 to 23; that stretch reads NTRDEGNETEASR. Basic residues predominate over residues 25-36; it reads SKLRRTRKKVTK. The span at 91–131 shows a compositional bias: polar residues; the sequence is NQTTVIKPSPLKTSASAPCSEFNTNSNHADNTWEDTQIPTT. A GS beta-grasp domain is found at 148–242; it reads NHLQFVRFEA…VICDTFTVTG (95 aa). The GS catalytic domain maps to 249–574; it reads PRYIAKRQLS…ERNKFLEYFI (326 aa).

It belongs to the glutamine synthetase family. Dodecamer. Interacts with BFSP2 and VIM.

Its function is as follows. May act as a component of the cytoskeleton or as a chaperone for the reorganization of intermediate filament proteins during terminal differentiation in the lens. Does not seem to have enzymatic activity. The protein is Lengsin (LGSN) of Canis lupus familiaris (Dog).